The primary structure comprises 86 residues: MSIFPIALALLLIGLEEGEAARDGYPLSKNNNCKIYCPDTDVCKDTCKNRASAPDGKCDGWNSCYCFKVPDHIPVWGDPGTKPCMT.

The signal sequence occupies residues 1–20 (MSIFPIALALLLIGLEEGEA). An LCN-type CS-alpha/beta domain is found at 22–85 (RDGYPLSKNN…WGDPGTKPCM (64 aa)). Disulfide bonds link cysteine 33–cysteine 84, cysteine 37–cysteine 58, cysteine 43–cysteine 64, and cysteine 47–cysteine 66.

This sequence belongs to the long (4 C-C) scorpion toxin superfamily. Sodium channel inhibitor family. Beta subfamily. Expressed by the venom gland.

It is found in the secreted. Functionally, beta toxins bind voltage-independently at site-4 of sodium channels (Nav) and shift the voltage of activation toward more negative potentials thereby affecting sodium channel activation and promoting spontaneous and repetitive firing. In Tityus pachyurus (Colombian scorpion), this protein is Toxin Tpa6.